The chain runs to 509 residues: Protein OS-9 homolog (509 aa).

The N-terminal stretch at 1 to 23 (MRRQSRIVASLLVLACASSGAFA) is a signal peptide. A compositionally biased stretch (polar residues) spans 64–74 (SPDLNDISEQT). Residues 64-91 (SPDLNDISEQTPLKDESEESIRDGSSGE) are disordered. Residues 75–91 (PLKDESEESIRDGSSGE) are compositionally biased toward basic and acidic residues. Asparagine 120 carries N-linked (GlcNAc...) asparagine glycosylation. The region spanning 151–291 (GKCLYYISGW…LIYTPRLCND (141 aa)) is the MRH domain. The cysteines at positions 153 and 166 are disulfide-linked. Residues tryptophan 160, tryptophan 161, glutamine 173, aspartate 246, arginine 252, glutamate 273, and tyrosine 279 each contribute to the a mannooligosaccharide derivative site. Disulfide bonds link cysteine 245/cysteine 277 and cysteine 260/cysteine 289. The segment at 433 to 509 (GVVDTDEDEE…GSEEIFKDEL (77 aa)) is disordered. Positions 436-451 (DTDEDEEDGYENEEGE) are enriched in acidic residues. The segment covering 452-461 (TDKREQRENT) has biased composition (basic and acidic residues). Residues 489–502 (RSEDGEDPDVDGSE) are compositionally biased toward acidic residues. The short motif at 506–509 (KDEL) is the Prevents secretion from ER element.

Belongs to the OS-9 family. Interacts with missfolded ER lumenal proteins.

The protein resides in the endoplasmic reticulum membrane. Functionally, lectin involved in the quality control of the secretory pathway. As a member of the endoplasmic reticulum-associated degradation lumenal (ERAD-L) surveillance system, targets misfolded endoplasmic reticulum lumenal glycoproteins for degradation. This Emericella nidulans (strain FGSC A4 / ATCC 38163 / CBS 112.46 / NRRL 194 / M139) (Aspergillus nidulans) protein is Protein OS-9 homolog (yos9).